The chain runs to 242 residues: Phosphoribosylaminoimidazole-succinocarboxamide synthase (242 aa).

This sequence belongs to the SAICAR synthetase family.

The enzyme catalyses 5-amino-1-(5-phospho-D-ribosyl)imidazole-4-carboxylate + L-aspartate + ATP = (2S)-2-[5-amino-1-(5-phospho-beta-D-ribosyl)imidazole-4-carboxamido]succinate + ADP + phosphate + 2 H(+). It participates in purine metabolism; IMP biosynthesis via de novo pathway; 5-amino-1-(5-phospho-D-ribosyl)imidazole-4-carboxamide from 5-amino-1-(5-phospho-D-ribosyl)imidazole-4-carboxylate: step 1/2. This chain is Phosphoribosylaminoimidazole-succinocarboxamide synthase, found in Prochlorococcus marinus (strain MIT 9303).